A 122-amino-acid polypeptide reads, in one-letter code: Small ribosomal subunit protein bS6 (122 aa).

The protein belongs to the bacterial ribosomal protein bS6 family.

Binds together with bS18 to 16S ribosomal RNA. The polypeptide is Small ribosomal subunit protein bS6 (Trichlorobacter lovleyi (strain ATCC BAA-1151 / DSM 17278 / SZ) (Geobacter lovleyi)).